A 393-amino-acid chain; its full sequence is Putative mitochondrial cysteine synthase (393 aa).

Residues 12–31 traverse the membrane as a helical segment; it reads LAWRECISIASVLIGAYASY. Lysine 86 is modified (N6-(pyridoxal phosphate)lysine). Pyridoxal 5'-phosphate-binding positions include 230 to 234 and serine 338; that span reads GTGGT.

This sequence belongs to the cysteine synthase/cystathionine beta-synthase family. Requires pyridoxal 5'-phosphate as cofactor.

The protein localises to the mitochondrion. It localises to the mitochondrion outer membrane. It catalyses the reaction O-acetyl-L-serine + hydrogen sulfide = L-cysteine + acetate. Putative cysteine synthase that catalyzes the conversion of O-acetyl-L-serine (OAS) into cysteine, the last step in the cysteine biosynthesis pathway. However, this CS-like protein is unlikely to function in cysteine biosynthesis. It seems that in S.cerevisiae cysteine biosynthesis occurs exclusively through the cystathionine pathway and not via direct incorporation of sulfur into OAS. The polypeptide is Putative mitochondrial cysteine synthase (Saccharomyces cerevisiae (strain ATCC 204508 / S288c) (Baker's yeast)).